Reading from the N-terminus, the 39-residue chain is Large ribosomal subunit protein bL36 (39 aa).

It belongs to the bacterial ribosomal protein bL36 family.

This is Large ribosomal subunit protein bL36 from Oenococcus oeni (strain ATCC BAA-331 / PSU-1).